The following is a 193-amino-acid chain: Cytochrome c biogenesis ATP-binding export protein CcmA (193 aa).

One can recognise an ABC transporter domain in the interval Leu-9 to Val-191. Gly-41–Thr-48 provides a ligand contact to ATP.

Belongs to the ABC transporter superfamily. CcmA exporter (TC 3.A.1.107) family. In terms of assembly, the complex is composed of two ATP-binding proteins (CcmA) and two transmembrane proteins (CcmB).

It localises to the cell inner membrane. It catalyses the reaction heme b(in) + ATP + H2O = heme b(out) + ADP + phosphate + H(+). Functionally, part of the ABC transporter complex CcmAB involved in the biogenesis of c-type cytochromes; once thought to export heme, this seems not to be the case, but its exact role is uncertain. Responsible for energy coupling to the transport system. The chain is Cytochrome c biogenesis ATP-binding export protein CcmA from Hyphomonas neptunium (strain ATCC 15444).